A 284-amino-acid chain; its full sequence is 4-diphosphocytidyl-2-C-methyl-D-erythritol kinase (284 aa).

K14 is a catalytic residue. Position 98-108 (98-108 (PMGGGIGGGSS)) interacts with ATP. Residue D140 is part of the active site.

The protein belongs to the GHMP kinase family. IspE subfamily.

It catalyses the reaction 4-CDP-2-C-methyl-D-erythritol + ATP = 4-CDP-2-C-methyl-D-erythritol 2-phosphate + ADP + H(+). It participates in isoprenoid biosynthesis; isopentenyl diphosphate biosynthesis via DXP pathway; isopentenyl diphosphate from 1-deoxy-D-xylulose 5-phosphate: step 3/6. Functionally, catalyzes the phosphorylation of the position 2 hydroxy group of 4-diphosphocytidyl-2C-methyl-D-erythritol. The protein is 4-diphosphocytidyl-2-C-methyl-D-erythritol kinase of Shewanella loihica (strain ATCC BAA-1088 / PV-4).